A 372-amino-acid chain; its full sequence is Oxidoreductase ptaL (372 aa).

The first 16 residues, 1 to 16 (MKHIVIIGGGFAGVST), serve as a signal peptide directing secretion. Residues 8–12 (GGGFA) and Arg51 each bind 6-hydroxy-FAD. Residue Asn251 is glycosylated (N-linked (GlcNAc...) asparagine). Asp285 serves as a coordination point for 6-hydroxy-FAD.

This sequence belongs to the FAD-dependent oxidoreductase family. Requires 6-hydroxy-FAD as cofactor.

It functions in the pathway secondary metabolite biosynthesis. Functionally, oxidoreductase; part of the gene cluster that mediates the biosynthesis of pestheic acid, a diphenyl ether which is a biosynthetic precursor of the unique chloropupukeananes. The biosynthesis initiates from condensation of acetate and malonate units catalyzed by the non-reducing PKS ptaA. As the ptaA protein is TE/CLC domain-deficient, hydrolysis and Claisen cyclization of the polyketide could be catalyzed by ptaB containing a beta-lactamase domain. The ptaB protein might hydrolyze the thioester bond between the ACP of ptaA and the intermediate to release atrochrysone carboxylic acid, which is spontaneously dehydrated to form endocrocin anthrone. Endocrocin anthrone is then converted to endocrocin, catalyzed by the anthrone oxygenase ptaC. Spontaneous decarboxylation of endocrocin occurs to generate emodin. An O-methyltransferase (ptaH or ptaI) could methylate emodin to form physcion. PtaJ could then catalyze the oxidative cleavage of physcion, and rotation of the intermediate could then afford desmethylisosulochrin. PtaF, a putative NADH-dependent oxidoreductase, might also participate in the oxidative cleavage step. Desmethylisosulochrin is then transformed by another O-methyltransferase (ptaH or ptaI) to form isosulochrin. Chlorination of isosulochrin by ptaM in the cyclohexadienone B ring then produces chloroisosulochrin. PtaE is responsible for the oxidative coupling reactions of both benzophenones isosulochrin and chloroisosulochrin to RES-1214-1 and pestheic acid respectively, regardless of chlorination. This is Oxidoreductase ptaL from Pestalotiopsis fici (strain W106-1 / CGMCC3.15140).